The chain runs to 126 residues: MEEITMALNIENIIAEIKEASILELNDLVKAIEEEFGVTAAAPVAAAAAGGAEEAAKDSFDVELTSAGDKKVGVIKAVREITGLGLKEAKGLVDGAPANVKEGVAAAEAEEIKAKLEEAGATITLK.

This sequence belongs to the bacterial ribosomal protein bL12 family. As to quaternary structure, homodimer. Part of the ribosomal stalk of the 50S ribosomal subunit. Forms a multimeric L10(L12)X complex, where L10 forms an elongated spine to which 2 to 4 L12 dimers bind in a sequential fashion. Binds GTP-bound translation factors.

Functionally, forms part of the ribosomal stalk which helps the ribosome interact with GTP-bound translation factors. Is thus essential for accurate translation. The chain is Large ribosomal subunit protein bL12 from Streptococcus pyogenes serotype M28 (strain MGAS6180).